We begin with the raw amino-acid sequence, 519 residues long: UvrABC system protein C (519 aa).

Residues 9–87 enclose the GIY-YIG domain; that stretch reads HLPGCYLFKN…IKKHWPRYNI (79 aa). The UVR domain occupies 191–226; that stretch reads RELIESMEKDMRELASRQQFEQAMALRDEIAALEYL.

Belongs to the UvrC family. In terms of assembly, interacts with UvrB in an incision complex.

Its subcellular location is the cytoplasm. The UvrABC repair system catalyzes the recognition and processing of DNA lesions. UvrC both incises the 5' and 3' sides of the lesion. The N-terminal half is responsible for the 3' incision and the C-terminal half is responsible for the 5' incision. The sequence is that of UvrABC system protein C from Methanosarcina barkeri (strain Fusaro / DSM 804).